The following is a 282-amino-acid chain: Homeobox-leucine zipper protein HAT1 (282 aa).

The disordered stretch occupies residues 71–134 (LEEETGVSSP…EEDYGGETCR (64 aa)). Residues 76 to 89 (GVSSPNSTISSTVS) show a composition bias toward low complexity. Positions 132–191 (TCRKKLRLSKDQSAVLEDTFKEHNTLNPKQKLALAKKLGLTARQVEVWFQNRRARTKLKQ) form a DNA-binding region, homeobox. The segment at 199–220 (LKRCVEKLTEENRRLEKEAAEL) is leucine-zipper.

This sequence belongs to the HD-ZIP homeobox family. Class II subfamily. Interacts with BZIP30.

Its subcellular location is the nucleus. In terms of biological role, probable transcription factor. The chain is Homeobox-leucine zipper protein HAT1 (HAT1) from Arabidopsis thaliana (Mouse-ear cress).